Reading from the N-terminus, the 363-residue chain is Replication factor C subunit 4 (363 aa).

The residue at position 1 (M1) is an N-acetylmethionine. The tract at residues 1–36 (MQAFLKGTSISTKPPLTKDRGVAASAGSSGENKKAK) is disordered. Residues K6 and K13 each carry the N6-acetyllysine modification. 78–85 (GPPGTGKT) contributes to the ATP binding site.

It belongs to the activator 1 small subunits family. In terms of assembly, subunit of the RFC complex, an heteropentameric complex consisting of a large subunit RFC1 and four small subunits RFC2, RFC3, RFC4 and RFC5; the RFC complex interacts with PCNA. Forms an heterotetrameric complex with RFC2, RFC3 and RFC5; this complex has ATPase activity but is not stimulated by PCNA. The heterotetramer of subunits RFC2, RFC3, RFC4 and RFC5 interacts with RAD17. Interacts with ATAD5. Interacts with CTF18. Interacts with CNTD1; this interaction facilitates crossover formation.

It is found in the nucleus. Subunit of the replication factor C (RFC) complex which acts during elongation of primed DNA templates by DNA polymerases delta and epsilon, and is necessary for ATP-dependent loading of proliferating cell nuclear antigen (PCNA) onto primed DNA. The RFC4 subunit probably functions as a scaffold on which the other complex components can assemble. This Homo sapiens (Human) protein is Replication factor C subunit 4 (RFC4).